A 162-amino-acid polypeptide reads, in one-letter code: Transcriptional repressor NrdR (162 aa).

Residues C3–C34 fold into a zinc finger. One can recognise an ATP-cone domain in the interval I49–D139.

Belongs to the NrdR family. The cofactor is Zn(2+).

Negatively regulates transcription of bacterial ribonucleotide reductase nrd genes and operons by binding to NrdR-boxes. This is Transcriptional repressor NrdR from Thermosynechococcus vestitus (strain NIES-2133 / IAM M-273 / BP-1).